Consider the following 525-residue polypeptide: Peptide chain release factor 3 (525 aa).

Residues 9–276 enclose the tr-type G domain; it reads AKRRTFAIIS…GFTRYAPAPQ (268 aa). Residues 18-25, 86-90, and 140-143 contribute to the GTP site; these read SHPDAGKT, DTPGH, and NKFD.

Belongs to the TRAFAC class translation factor GTPase superfamily. Classic translation factor GTPase family. PrfC subfamily.

Its subcellular location is the cytoplasm. Its function is as follows. Increases the formation of ribosomal termination complexes and stimulates activities of RF-1 and RF-2. It binds guanine nucleotides and has strong preference for UGA stop codons. It may interact directly with the ribosome. The stimulation of RF-1 and RF-2 is significantly reduced by GTP and GDP, but not by GMP. This chain is Peptide chain release factor 3, found in Francisella tularensis subsp. tularensis (strain FSC 198).